The primary structure comprises 305 residues: Serine/threonine-protein phosphatase PP-X isozyme 2 (305 aa).

Positions 51, 53, 79, and 111 each coordinate Mn(2+). Residue His-112 is the Proton donor of the active site. Mn(2+) contacts are provided by His-161 and His-236.

It belongs to the PPP phosphatase family. PP-4 (PP-X) subfamily. Requires Mn(2+) as cofactor. In terms of tissue distribution, ubiquitous, mostly expressed in root mersitems, flowers, and vascular tissues.

The protein localises to the plastid stroma. The catalysed reaction is O-phospho-L-seryl-[protein] + H2O = L-seryl-[protein] + phosphate. It catalyses the reaction O-phospho-L-threonyl-[protein] + H2O = L-threonyl-[protein] + phosphate. This chain is Serine/threonine-protein phosphatase PP-X isozyme 2 (PPX2), found in Arabidopsis thaliana (Mouse-ear cress).